Reading from the N-terminus, the 150-residue chain is Multiprotein-bridging factor 1 (150 aa).

The interval 36–71 is disordered; it reads SSESKGAGQSKGPADHQRIAKLDRDDAPKPPEKVSA. Over residues 48–70 the composition is skewed to basic and acidic residues; it reads PADHQRIAKLDRDDAPKPPEKVS. Residues 84–137 form the HTH cro/C1-type domain; sequence IKNAEGKSMTQKELATSVNAKPQDIADLESGRAVPDQALLGKLERKLNVKLRGA. The H-T-H motif DNA-binding region spans 94 to 113; sequence QKELATSVNAKPQDIADLES.

The protein belongs to the MBF1 family.

Functionally, transcriptional coactivator that stimulates GCN4-dependent transcriptional activity by bridging the DNA-binding region of GCN4 and TBP (SPT15), thereby recruiting TBP to GCN4-bound promoters. Involved in induction of the ribosome quality control (RQC) pathway; a pathway that degrades nascent peptide chains during problematic translation. Required to prevent stalled ribosomes from frameshifting. The protein is Multiprotein-bridging factor 1 (MBF1) of Cryptococcus neoformans var. neoformans serotype D (strain B-3501A) (Filobasidiella neoformans).